The following is a 450-amino-acid chain: Protein phosphatase 1F (450 aa).

The 258-residue stretch at 152-409 folds into the PPM-type phosphatase domain; sequence LVSIHAIRNT…DNITVMVVFL (258 aa). Residues aspartate 194, glycine 195, aspartate 356, and aspartate 400 each contribute to the Mn(2+) site. Residues 420–450 are disordered; sequence GQGAGGAQADVGSQDLSTGLSELEINTSQRS. Over residues 433 to 450 the composition is skewed to polar residues; it reads QDLSTGLSELEINTSQRS. At serine 450 the chain carries Phosphoserine.

Belongs to the PP2C family. Associates with FEM1B. The cofactor is Mg(2+). Mn(2+) serves as cofactor.

It carries out the reaction O-phospho-L-seryl-[protein] + H2O = L-seryl-[protein] + phosphate. The enzyme catalyses O-phospho-L-threonyl-[protein] + H2O = L-threonyl-[protein] + phosphate. In terms of biological role, dephosphorylates and concomitantly deactivates CaM-kinase II activated upon autophosphorylation, and CaM-kinases IV and I activated upon phosphorylation by CaM-kinase kinase. Promotes apoptosis. The sequence is that of Protein phosphatase 1F (Ppm1f) from Rattus norvegicus (Rat).